A 59-amino-acid chain; its full sequence is Alpha-conotoxin CIA (59 aa).

The first 16 residues, 1 to 16 (MFTVFLLVVLTITVVS), serve as a signal peptide directing secretion. A propeptide spanning residues 17–42 (FPSDRASDGRDDEAKDERSDMYKSKR) is cleaved from the precursor. Cystine bridges form between C46-C51 and C47-C57. C57 is subject to Cysteine amide.

This sequence belongs to the conotoxin A superfamily. Expressed by the venom duct.

It localises to the secreted. In terms of biological role, alpha-conotoxins act on postsynaptic membranes, they bind to the nicotinic acetylcholine receptors (nAChR) and thus inhibit them. This toxin blocks the rat muscle nAChRs alpha-1-beta-1-gamma-delta (CHRNA1-CHRNB1-CHRNG-CHRND) (IC(50)=5.7 nM) and the rat neuronal nAChR alpha-3-beta-2/CHRNA3-CHRNB2 (IC(50)=2060 nM). In vivo, intramuscular injection into zebrafish produces rapid flaccid paralysis. This chain is Alpha-conotoxin CIA, found in Conus catus (Cat cone).